The chain runs to 924 residues: Bifunctional glutamine synthetase adenylyltransferase/adenylyl-removing enzyme (924 aa).

Residues 1-422 form an adenylyl removase region; the sequence is MQTKGCRFFM…QFKKLIQEEV (422 aa). The tract at residues 424–924 is adenylyl transferase; sequence SPDETDTELE…PASTMALESE (501 aa).

Belongs to the GlnE family. Mg(2+) serves as cofactor.

It carries out the reaction [glutamine synthetase]-O(4)-(5'-adenylyl)-L-tyrosine + phosphate = [glutamine synthetase]-L-tyrosine + ADP. It catalyses the reaction [glutamine synthetase]-L-tyrosine + ATP = [glutamine synthetase]-O(4)-(5'-adenylyl)-L-tyrosine + diphosphate. In terms of biological role, involved in the regulation of glutamine synthetase GlnA, a key enzyme in the process to assimilate ammonia. When cellular nitrogen levels are high, the C-terminal adenylyl transferase (AT) inactivates GlnA by covalent transfer of an adenylyl group from ATP to specific tyrosine residue of GlnA, thus reducing its activity. Conversely, when nitrogen levels are low, the N-terminal adenylyl removase (AR) activates GlnA by removing the adenylyl group by phosphorolysis, increasing its activity. The regulatory region of GlnE binds the signal transduction protein PII (GlnB) which indicates the nitrogen status of the cell. The chain is Bifunctional glutamine synthetase adenylyltransferase/adenylyl-removing enzyme from Acinetobacter baylyi (strain ATCC 33305 / BD413 / ADP1).